The sequence spans 270 residues: tRNA pseudouridine synthase B (270 aa).

Residue D49 is the Nucleophile of the active site.

Belongs to the pseudouridine synthase TruB family. Type 1 subfamily.

It carries out the reaction uridine(55) in tRNA = pseudouridine(55) in tRNA. Functionally, responsible for synthesis of pseudouridine from uracil-55 in the psi GC loop of transfer RNAs. The chain is tRNA pseudouridine synthase B from Bartonella quintana (strain Toulouse) (Rochalimaea quintana).